A 534-amino-acid chain; its full sequence is Melanopsin-B (534 aa).

The Extracellular segment spans residues 1-32 (MDLGKTVEYGTHRQDAIAQIDVPDQVLYTIGS). Residues 33–53 (FILIIGSVGIIGNMLVLYAFY) form a helical membrane-spanning segment. Residues 54 to 64 (RNKKLRTAPNY) lie on the Cytoplasmic side of the membrane. The chain crosses the membrane as a helical span at residues 65-85 (FIINLAISDFLMSATQAPVCF). At 86 to 102 (LSSLHREWILGDIGCNV) the chain is on the extracellular side. A disulfide bridge connects residues Cys100 and Cys178. A helical membrane pass occupies residues 103-123 (YAFCGALFGITSMMTLLAISI). The Cytoplasmic portion of the chain corresponds to 124–146 (NRYIVITKPLQSIQWSSKKRTSQ). The chain crosses the membrane as a helical span at residues 147-167 (IIVLVWMYSLMWSLAPLLGWS). At 168 to 198 (SYVPEGLRISCTWDYVTSTMSNRSYTMMLCC) the chain is on the extracellular side. An N-linked (GlcNAc...) asparagine glycan is attached at Asn189. A helical membrane pass occupies residues 199–219 (CVFFIPLIVISHCYLFMFLAI). Residues 220–250 (RSTGRNVQKLGSYGRQSFLSQSMKNEWKMAK) are Cytoplasmic-facing. The chain crosses the membrane as a helical span at residues 251–271 (IAFVIIIVFVLSWSPYACVTL). Topologically, residues 272–286 (IAWAGHGKSLTPYSK) are extracellular. The chain crosses the membrane as a helical span at residues 287–307 (TVPAVIAKASAIYNPIIYGII). N6-(retinylidene)lysine is present on Lys294. Residues 308 to 534 (HPKYRETIHK…LYEVVERFLS (227 aa)) lie on the Cytoplasmic side of the membrane. Residues 478-501 (SNISETKEEHDNNSEEKSKRTEEE) are disordered. Basic and acidic residues predominate over residues 482-499 (ETKEEHDNNSEEKSKRTE).

This sequence belongs to the G-protein coupled receptor 1 family. Opsin subfamily. As to expression, highest level in the iris, high level in the inner nuclear layer, possibly in horizontal cells, and lowest level in retinal pigment epithelium. Expressed in melanophore cells of the skin.

The protein localises to the cell membrane. Functionally, photoreceptor implicated in non-image-forming responses to light. May be able to isomerize covalently bound all-trans retinal back to 11-cis retinal. In Xenopus laevis (African clawed frog), this protein is Melanopsin-B.